The chain runs to 1009 residues: MICCEIQQKSHKKNKPQPDDKSLLARFFHADRSLTAVASELDSFDGRAEPDRCSRLVSRLRQNQDKVLSITNLIMEELLGEDRDPRAFRAKFPEEVLQENLAGQLWFGAECLAAGSSIMNREVESKEMRPLAQAVTKSLGNVRVLLRDQCLRNNVPNSKTLHLDLNDYTTEQLYESLKIFDRLFAEFELSYVSAMVQVKSRHEYEMQQWIGVLFSETLQRALKIGLLDQDMVDAFDPGLMFSIPRLAIVAGLVVYAKGPLDMDMPGDQLSEMFRPFRTILIKIRDLLRNLNNQELYQLEKLLCTNEDINTKVPVGSSSIEAPTPEHSSTPTTSSNNNNNNKSSSSSSGTGSGSGAGTVERLVDQRNNNNNQQNSNESTTLPPRSPSMLSLSASSTPTASPAPSPTPSHSIASTTSSAASSNSTHPPADWSDGDDEDEDEEEDEEEDELEDTEDDTDEEQLLKDIVAADCASGYLIPNTNLGNLLQPQQVPLTDNFVASEDDDEYGTGDQQQEQPQQQGHRKEDEEEPSTSAALQRLRLASSDDSEPHRDQGETIKSTEEQEQQQQQQEQQTLQSSRQRHSHSHSHSHRHHHRHHHHHHHSTHQQQLQHQPHHHQPHPHRLTRSGRKRCSMEAAVEVEQQEQGLASGDTSAASSLSDDVSLAMRNTTARLKFNTENLLHRLFVCIAGVADQLQTNFASDLRQILRSVFLMNMSSVEEEQIEIPEKTKESELFEFRASENDVIQESAGSNQSIYSAEEVNPELDNVFSAGSRHSAGATMQRNNTIDNPSSSNTSSSSATTRNHVTRSRSLGDQETIARSMPAPVHQQEQEMQQQQDHQQQQHQHQVQVQLQRQRNNSVGSNTPSSASSTSSSSEQNSPVSTRSGSSRRRLQSNNETQMPSSTSTATAAATLAPPAWIPDGKAPRCMSCQTPFTAFRRRHHCRNCGGVFCGVCSNATAPLPKYGLTKAVRVCRDCYVREVQVRSSSTTTSVSVNVGVQMQSQAGRVQTATAS.

3 disordered regions span residues 313-460 (PVGS…EEQL), 497-629 (ASED…KRCS), and 777-905 (MQRN…TATA). 3 stretches are compositionally biased toward low complexity: residues 327–348 (SSTPTTSSNNNNNNKSSSSSSG), 364–398 (QRNNNNNQQNSNESTTLPPRSPSMLSLSASSTPTA), and 406–427 (PSHSIASTTSSAASSNSTHPPA). Over residues 430 to 458 (SDGDDEDEDEEEDEEEDELEDTEDDTDEE) the composition is skewed to acidic residues. Ser-541 carries the phosphoserine modification. Over residues 544–558 (SEPHRDQGETIKSTE) the composition is skewed to basic and acidic residues. Over residues 562 to 575 (QQQQQQEQQTLQSS) the composition is skewed to low complexity. Basic residues-rich tracts occupy residues 576–601 (RQRHSHSHSHSHRHHHRHHHHHHHST) and 609–627 (QPHHHQPHPHRLTRSGRKR). Positions 780–798 (NNTIDNPSSSNTSSSSATT) are enriched in low complexity. A Phosphoserine modification is found at Ser-807. A compositionally biased stretch (low complexity) spans 822-878 (VHQQEQEMQQQQDHQQQQHQHQVQVQLQRQRNNSVGSNTPSSASSTSSSSEQNSPVS). Residues 917–977 (DGKAPRCMSC…VCRDCYVREV (61 aa)) form an FYVE-type zinc finger. Residues Cys-923, Cys-926, Cys-939, Cys-942, Cys-947, Cys-950, Cys-969, and Cys-972 each coordinate Zn(2+).

This sequence belongs to the lst-2 family.

Negative regulator of epidermal growth factor receptor (EGFR) signaling. In Drosophila persimilis (Fruit fly), this protein is Lateral signaling target protein 2 homolog.